The following is a 537-amino-acid chain: uncharacterized protein (537 aa).

The interval 10–56 (HHDVEPQNVEEEPPLTGQTIVTEDKLETSAKDKKHESPSMSEDEEGS) is disordered. Residues 31 to 46 (TEDKLETSAKDKKHES) are compositionally biased toward basic and acidic residues. 12 consecutive transmembrane segments (helical) span residues 90–110 (FVAT…TACI), 133–153 (LFIV…DIFG), 156–176 (WVYV…ALAY), 180–200 (MMAI…ANVA), 213–233 (GFGI…GSPI), 243–263 (WFYW…VLCP), 313–333 (PIIM…FLYL), 348–368 (YMGA…VVML), 393–413 (FLIS…FAFT), 422–442 (SPLI…LAMI), 457–477 (IAAF…LGII), and 492–512 (AFIS…GHLI).

This sequence belongs to the major facilitator superfamily. CAR1 family.

Its subcellular location is the endoplasmic reticulum. The protein resides in the golgi apparatus. It localises to the membrane. This is an uncharacterized protein from Schizosaccharomyces pombe (strain 972 / ATCC 24843) (Fission yeast).